We begin with the raw amino-acid sequence, 115 residues long: Ubiquitin-related modifier 1 (115 aa).

The residue at position 115 (glycine 115) is a 1-thioglycine. Glycine 115 participates in a covalent cross-link: Glycyl lysine isopeptide (Gly-Lys) (interchain with K-? in acceptor proteins).

Belongs to the URM1 family. Post-translationally, C-terminal thiocarboxylation occurs in 2 steps, it is first acyl-adenylated (-COAMP) via the hesA/moeB/thiF part of UBA4, then thiocarboxylated (-COSH) via the rhodanese domain of UBA4.

The protein localises to the cytoplasm. It functions in the pathway tRNA modification; 5-methoxycarbonylmethyl-2-thiouridine-tRNA biosynthesis. In terms of biological role, acts as a sulfur carrier required for 2-thiolation of mcm(5)S(2)U at tRNA wobble positions of cytosolic tRNA(Lys), tRNA(Glu) and tRNA(Gln). Serves as sulfur donor in tRNA 2-thiolation reaction by being thiocarboxylated (-COSH) at its C-terminus by the MOCS3 homolog UBA4. The sulfur is then transferred to tRNA to form 2-thiolation of mcm(5)S(2)U. Prior mcm(5) tRNA modification by the elongator complex is required for 2-thiolation. Also acts as a ubiquitin-like protein (UBL) that is covalently conjugated via an isopeptide bond to lysine residues of target proteins such as AHP1. The thiocarboxylated form serves as substrate for conjugation and oxidative stress specifically induces the formation of UBL-protein conjugates. In Coccidioides immitis (strain RS) (Valley fever fungus), this protein is Ubiquitin-related modifier 1.